The chain runs to 240 residues: Uridylate kinase (240 aa).

An ATP-binding site is contributed by 13-16 (KLSG). The tract at residues 21 to 26 (GEKGFG) is involved in allosteric activation by GTP. Residue glycine 55 coordinates UMP. 2 residues coordinate ATP: glycine 56 and arginine 60. Residues aspartate 75 and 136 to 143 (IGNPYFST) contribute to the UMP site. ATP contacts are provided by asparagine 164, tyrosine 170, and aspartate 173.

Belongs to the UMP kinase family. In terms of assembly, homohexamer.

Its subcellular location is the cytoplasm. It catalyses the reaction UMP + ATP = UDP + ADP. The protein operates within pyrimidine metabolism; CTP biosynthesis via de novo pathway; UDP from UMP (UMPK route): step 1/1. Allosterically activated by GTP. Inhibited by UTP. Functionally, catalyzes the reversible phosphorylation of UMP to UDP. The polypeptide is Uridylate kinase (Staphylococcus aureus (strain USA300)).